A 143-amino-acid chain; its full sequence is Large ribosomal subunit protein uL15 (143 aa).

Positions 20 to 52 are disordered; it reads GRGIGSGKGKTAGRGHKGQHSRAGGYHKVGFEG. Basic residues predominate over residues 30 to 39; sequence TAGRGHKGQH.

This sequence belongs to the universal ribosomal protein uL15 family. Part of the 50S ribosomal subunit.

In terms of biological role, binds to the 23S rRNA. This Coxiella burnetii (strain CbuK_Q154) (Coxiella burnetii (strain Q154)) protein is Large ribosomal subunit protein uL15.